Reading from the N-terminus, the 134-residue chain is Small ribosomal subunit protein uS9c (134 aa).

This sequence belongs to the universal ribosomal protein uS9 family.

The protein resides in the plastid. The protein localises to the chloroplast. The polypeptide is Small ribosomal subunit protein uS9c (rps9) (Euglena gracilis).